The primary structure comprises 282 residues: MKLCYQNIQITELVNDWHEQEKTIAFIPTMGGLHQGHLSLIDIAKQKADKVVVSIFVNPAQFDKNEDLDSYPRSLNADLVELEENVDSVFVPDVKQIYPNGISKYIDVGMIGRILCGKTRPHFFNGMIQVVEILFEIVRPNVAIFGQKDYQQLLVIKQMVKNLSLDICIESGEIIREKSGLAMSTRNQYLSENDAKIAANLYRILTYVKHEVLQNKKIDVLKKMAESDLKQHFKLDYLEVLDANTLKQITDNTCQIIILSAVFLGSVRLIDNIIFLKKDNYV.

ATP is bound at residue 30 to 37; the sequence is MGGLHQGH. The Proton donor role is filled by His-37. Gln-61 serves as a coordination point for (R)-pantoate. Gln-61 serves as a coordination point for beta-alanine. 146–149 contributes to the ATP binding site; the sequence is GQKD. A (R)-pantoate-binding site is contributed by Gln-152. Residues Ile-175 and 183-186 each bind ATP; that span reads MSTR.

It belongs to the pantothenate synthetase family. Homodimer.

It is found in the cytoplasm. It carries out the reaction (R)-pantoate + beta-alanine + ATP = (R)-pantothenate + AMP + diphosphate + H(+). The protein operates within cofactor biosynthesis; (R)-pantothenate biosynthesis; (R)-pantothenate from (R)-pantoate and beta-alanine: step 1/1. In terms of biological role, catalyzes the condensation of pantoate with beta-alanine in an ATP-dependent reaction via a pantoyl-adenylate intermediate. This chain is Pantothenate synthetase, found in Vesicomyosocius okutanii subsp. Calyptogena okutanii (strain HA).